Consider the following 310-residue polypeptide: Methionyl-tRNA formyltransferase (310 aa).

111-114 serves as a coordination point for (6S)-5,6,7,8-tetrahydrofolate; it reads SLLP.

This sequence belongs to the Fmt family.

It catalyses the reaction L-methionyl-tRNA(fMet) + (6R)-10-formyltetrahydrofolate = N-formyl-L-methionyl-tRNA(fMet) + (6S)-5,6,7,8-tetrahydrofolate + H(+). Functionally, attaches a formyl group to the free amino group of methionyl-tRNA(fMet). The formyl group appears to play a dual role in the initiator identity of N-formylmethionyl-tRNA by promoting its recognition by IF2 and preventing the misappropriation of this tRNA by the elongation apparatus. The protein is Methionyl-tRNA formyltransferase of Rhodopseudomonas palustris (strain ATCC BAA-98 / CGA009).